Reading from the N-terminus, the 231-residue chain is Eukaryotic translation initiation factor 4E-1 (231 aa).

Residues 1 to 55 (MVVEDTQKSSITDDQITANPNNENEDLEEGEILDDDDSSATSRPPSSSGALARNP) form a disordered region. Polar residues predominate over residues 8–18 (KSSITDDQITA). A compositionally biased stretch (acidic residues) spans 23 to 38 (ENEDLEEGEILDDDDS). Low complexity predominate over residues 39–48 (SATSRPPSSS). 2 EIF4G-binding regions span residues 56 to 59 (HPLE) and 66 to 102 (FDNPSAKSKQAAWGSSIRPIYTFATVEEFWSIYNNIH). MRNA-binding positions include 74–79 (KQAAWG), lysine 106, and 124–125 (WE). Cysteine 129 and cysteine 167 are oxidised to a cystine. Residues 150–159 (YTLLGMIGEQ) are EIF4G-binding. MRNA contacts are provided by residues 174-179 (RNRQEK) and 219-223 (KKHDR).

It belongs to the eukaryotic initiation factor 4E family. In terms of assembly, EIF4F is a multi-subunit complex, the composition of which varies with external and internal environmental conditions. It is composed of at least EIF4A, EIF4E and EIF4G. EIF4E is also known to interact with other partners. In higher plants two isoforms of EIF4F have been identified, named isoform EIF4F and isoform EIF(iso)4F. Isoform EIF4F has subunits p220 and p26, whereas isoform EIF(iso)4F has subunits p82 and p28. As to quaternary structure, (Microbial infection) Interacts with potyvirus peanut stripe virus (PStV) helper component proteinase (HC-Pro) in the cytoplasm and with PStV viral genome-linked protein (VPg) in the nucleus; these interactions are possible in susceptible hosts but impaired in resistant plants. According to the redox status, the Cys-129-Cys-167 disulfide bridge may have a role in regulating protein function by affecting its ability to bind capped mRNA. In terms of tissue distribution, expressed ubiquitously with highest levels in young leaves and roots, and lowest levels in flowers.

The protein resides in the nucleus. Its subcellular location is the cytoplasm. In terms of biological role, component of the protein complex eIF4F, which is involved in the recognition of the mRNA cap, ATP-dependent unwinding of 5'-terminal secondary structure and recruitment of mRNA to the ribosome. Recognizes and binds the 7-methylguanosine-containing mRNA cap during an early step in the initiation of protein synthesis and facilitates ribosome binding by inducing the unwinding of the mRNAs secondary structures. Key component of recessive resistance to potyviruses such as peanut stripe virus (PStV). Functionally, (Microbial infection) Susceptibility host factor required for viral infection by recruiting viral RNAs to the host ribosomal complex via an interaction with viral genome-linked protein (VPg). In Arachis hypogaea (Peanut), this protein is Eukaryotic translation initiation factor 4E-1.